A 495-amino-acid chain; its full sequence is Membrane-bound glycerophospholipid O-acyltransferase 1 (495 aa).

Helical transmembrane passes span 34 to 54 (VNFV…RIYL), 70 to 90 (IFGI…LFVL), 126 to 146 (IYIF…MIVT), 180 to 200 (PSFL…AGPC), 238 to 258 (TGAV…FLTL), and 297 to 317 (YFAW…FSGV). Catalysis depends on residues asparagine 350 and histidine 381. 3 consecutive transmembrane segments (helical) span residues 371–391 (VLTF…YFTF), 426–446 (TWAV…MLAV), and 450–470 (ISLY…IILF). Residue serine 488 is modified to Phosphoserine.

The protein belongs to the membrane-bound acyltransferase family. Expressed in neutrophils.

The protein resides in the endoplasmic reticulum membrane. It carries out the reaction a 1-acyl-sn-glycero-3-phospho-L-serine + an acyl-CoA = a 1,2-diacyl-sn-glycero-3-phospho-L-serine + CoA. The enzyme catalyses a 1-acyl-sn-glycero-3-phosphocholine + an acyl-CoA = a 1,2-diacyl-sn-glycero-3-phosphocholine + CoA. The catalysed reaction is a 1-acyl-sn-glycero-3-phosphoethanolamine + an acyl-CoA = a 1,2-diacyl-sn-glycero-3-phosphoethanolamine + CoA. It catalyses the reaction 1-(9Z-octadecenoyl)-sn-glycero-3-phospho-L-serine + (9Z)-octadecenoyl-CoA = 1,2-di-(9Z)-octadecenoyl-sn-glycero-3-phospho-L-serine + CoA. It carries out the reaction 1-(9Z-octadecenoyl)-sn-glycero-3-phospho-L-serine + octadecanoyl-CoA = 1-(9Z-octadecenoyl)-2-octadecanoyl-sn-glycero-3-phospho-L-serine + CoA. The enzyme catalyses 1-(9Z-octadecenoyl)-sn-glycero-3-phospho-L-serine + (9Z)-hexadecenoyl-CoA = 1-(9Z-octadecenoyl)-2-(9Z-hexadecenoyl)-sn-glycero-3-phospho-L-serine + CoA. The catalysed reaction is 1-(9Z-octadecenoyl)-sn-glycero-3-phospho-L-serine + (9Z,12Z)-octadecadienoyl-CoA = 1-(9Z-octadecenoyl)-2-(9Z,12Z-octadienoyl)-sn-glycero-3-phospho-L-serine + CoA. It catalyses the reaction 1-hexadecanoyl-sn-glycero-3-phosphocholine + (9Z)-octadecenoyl-CoA = 1-hexadecanoyl-2-(9Z-octadecenoyl)-sn-glycero-3-phosphocholine + CoA. It carries out the reaction a 1-O-(1Z-alkenyl)-sn-glycero-3-phosphoethanolamine + (9Z)-octadecenoyl-CoA = 1-O-(1Z)-alkenyl-2-(9Z)-octadecenoyl-sn-glycero-3-phosphoethanolamine + CoA. The enzyme catalyses 1-octadecanoyl-sn-glycero-3-phosphoethanolamine + (9Z)-octadecenoyl-CoA = 1-octadecanoyl-2-(9Z-octadecenoyl)-sn-glycero-3-phosphoethanolamine + CoA. The catalysed reaction is 1-(9Z-octadecenoyl)-sn-glycero-3-phosphoethanolamine + (9Z)-octadecenoyl-CoA = 1,2-di-(9Z-octadecenoyl)-sn-glycero-3-phosphoethanolamine + CoA. It catalyses the reaction 1-hexadecanoyl-sn-glycero-3-phosphoethanolamine + (9Z)-octadecenoyl-CoA = 1-hexadecanoyl-2-(9Z-octadecenoyl)-sn-glycero-3-phosphoethanolamine + CoA. It carries out the reaction 1-(10Z-heptadecenoyl)-sn-glycero-3-phosphoethanolamine + hexadecanoyl-CoA = 1-(10Z-heptadecenoyl)-2-hexadecanoyl-sn-glycero-3-phosphoethanolamine + CoA. The enzyme catalyses 1-(10Z-heptadecenoyl)-sn-glycero-3-phosphoethanolamine + (9Z)-octadecenoyl-CoA = 1-(10Z-heptadecenoyl)-2-(9Z-octadecenoyl)-sn-glycero-3-phosphoethanolamine + CoA. Its pathway is lipid metabolism; phospholipid metabolism. Its activity is regulated as follows. Partially inhibited by thimerosal. Functionally, acyltransferase which catalyzes the transfer of an acyl group from an acyl-CoA towards a lysophospholipid producing a phospholipid and participates in the reacylation step of the phospholipid remodeling pathway also known as the Lands cycle. Acts on lysophosphatidylserine (1-acyl-2-hydroxy-sn-glycero-3-phospho-L-serine or LPS) and lysophosphatidylethanolamine (1-acyl-sn-glycero-3-phosphoethanolamine or LPE), and to a lesser extend lysophosphatidylcholine. Prefers oleoyl-CoA as the acyl donor and 1-oleoyl-LPE as acceptor. May play a role in neurite outgrowth during neuronal differentiation. This chain is Membrane-bound glycerophospholipid O-acyltransferase 1, found in Homo sapiens (Human).